A 141-amino-acid polypeptide reads, in one-letter code: N,N-dimethylformamidase alpha subunit (141 aa).

As to quaternary structure, heterotetramer of two DmfA1 (alpha) and two DmfA2 (beta) subunits.

It carries out the reaction N,N-dimethylformamide + H2O = dimethylamine + formate. Functionally, hydrolyzes N,N-dimethylformamide, and to a lesser extent N,N-dimethylacetamide and N,N-diethylacetamide. Has no activity against the substituted amides N-methylformamide, N-ethylformamide, N-ethylformamide and N-methylacetamide or the unsubstituted amides formamide, nicotinamide, acetoamide, benzamide, acetamide and acrylamide. The protein is N,N-dimethylformamidase alpha subunit of Paracoccus aminophilus.